Reading from the N-terminus, the 93-residue chain is Large ribosomal subunit protein bL27 (93 aa).

A propeptide spanning residues 1–9 (MIKINLQLF) is cleaved from the precursor.

This sequence belongs to the bacterial ribosomal protein bL27 family. The N-terminus is cleaved by ribosomal processing cysteine protease Prp.

The protein is Large ribosomal subunit protein bL27 of Ruminiclostridium cellulolyticum (strain ATCC 35319 / DSM 5812 / JCM 6584 / H10) (Clostridium cellulolyticum).